Consider the following 191-residue polypeptide: Divergent paired-related homeobox (191 aa).

Positions 1 to 15 (MPGSEDLRKGKDQMH) are enriched in basic and acidic residues. The tract at residues 1–20 (MPGSEDLRKGKDQMHSHRKR) is disordered. Positions 16–75 (SHRKRTMFTKKQLEDLNILFNENPYPNPSLQKEMASKIDIHPTVLQVWFKNHRAKLKKAK) form a DNA-binding region, homeobox.

This sequence belongs to the paired homeobox family.

Its subcellular location is the nucleus. Transcription factor that acts as a repressor. The sequence is that of Divergent paired-related homeobox from Homo sapiens (Human).